Consider the following 236-residue polypeptide: Small ribosomal subunit protein uS2c (236 aa).

This sequence belongs to the universal ribosomal protein uS2 family.

The protein resides in the plastid. Its subcellular location is the chloroplast. This is Small ribosomal subunit protein uS2c (rps2) from Barbarea verna (Land cress).